A 471-amino-acid chain; its full sequence is tRNA modification GTPase MnmE (471 aa).

(6S)-5-formyl-5,6,7,8-tetrahydrofolate contacts are provided by R26, E83, and K136. The TrmE-type G domain occupies 232–393 (GLRVVLAGQP…LRRRLLQLAG (162 aa)). N242 is a binding site for K(+). Residues 242–247 (NVGKSS), 261–267 (TPIAGTT), 286–289 (DTAG), 354–357 (NKAD), and 374–376 (SAR) contribute to the GTP site. S246 lines the Mg(2+) pocket. Residues T261, I263, and T266 each coordinate K(+). T267 lines the Mg(2+) pocket. A (6S)-5-formyl-5,6,7,8-tetrahydrofolate-binding site is contributed by K471.

This sequence belongs to the TRAFAC class TrmE-Era-EngA-EngB-Septin-like GTPase superfamily. TrmE GTPase family. As to quaternary structure, homodimer. Heterotetramer of two MnmE and two MnmG subunits. It depends on K(+) as a cofactor.

The protein localises to the cytoplasm. Its function is as follows. Exhibits a very high intrinsic GTPase hydrolysis rate. Involved in the addition of a carboxymethylaminomethyl (cmnm) group at the wobble position (U34) of certain tRNAs, forming tRNA-cmnm(5)s(2)U34. This is tRNA modification GTPase MnmE from Methylibium petroleiphilum (strain ATCC BAA-1232 / LMG 22953 / PM1).